We begin with the raw amino-acid sequence, 337 residues long: Carbonic anhydrase 14 (337 aa).

Residues 1–15 (MLFSALLLEVIWILA) form the signal peptide. At 16-290 (ADGGQHWTYE…AGSSYTTGEM (275 aa)) the chain is on the extracellular side. One can recognise an Alpha-carbonic anhydrase domain in the interval 20–278 (QHWTYEGPHG…LNQRMVFASF (259 aa)). Cysteines 40 and 221 form a disulfide. His84 serves as the catalytic Proton donor/acceptor. Residues His109, His111, and His135 each coordinate Zn(2+). The N-linked (GlcNAc...) asparagine glycan is linked to Asn213. Position 217-218 (217-218 (TT)) interacts with substrate. Residues 291–311 (LSLGVGILVGCLCLLLAVYFI) form a helical membrane-spanning segment. The Cytoplasmic portion of the chain corresponds to 312 to 337 (ARKIRKKRLENRKSVVFTSAQATTEA). A Phosphoserine modification is found at Ser325.

Belongs to the alpha-carbonic anhydrase family. It depends on Zn(2+) as a cofactor. High expression in all parts of the central nervous system and lower expression in adult liver, heart, small intestine, colon, kidney, urinary bladder and skeletal muscle.

The protein resides in the membrane. The catalysed reaction is hydrogencarbonate + H(+) = CO2 + H2O. Its activity is regulated as follows. Activated by histamine, L-adrenaline, L- and D-histidine, and L- and D-phenylalanine. Inhibited by coumarins, saccharin, sulfonamide derivatives such as acetazolamide (AZA) and Foscarnet (phosphonoformate trisodium salt). Functionally, reversible hydration of carbon dioxide. In Homo sapiens (Human), this protein is Carbonic anhydrase 14 (CA14).